A 305-amino-acid polypeptide reads, in one-letter code: Dermonecrotic toxin LiSicTox-alphaII1 (305 aa).

The first 18 residues, 1–18 (MLLHIALILGCWSVFSEG), serve as a signal peptide directing secretion. Residues 19–26 (AETDVAER) constitute a propeptide that is removed on maturation. His38 is a catalytic residue. Mg(2+) contacts are provided by Glu58 and Asp60. The Nucleophile role is filled by His74. 2 disulfides stabilise this stretch: Cys78-Cys84 and Cys80-Cys223. Asp118 is a Mg(2+) binding site.

The protein belongs to the arthropod phospholipase D family. Class II subfamily. Class IIa sub-subfamily. Mg(2+) serves as cofactor. Expressed by the venom gland.

It is found in the secreted. It carries out the reaction an N-(acyl)-sphingosylphosphocholine = an N-(acyl)-sphingosyl-1,3-cyclic phosphate + choline. It catalyses the reaction an N-(acyl)-sphingosylphosphoethanolamine = an N-(acyl)-sphingosyl-1,3-cyclic phosphate + ethanolamine. The enzyme catalyses a 1-acyl-sn-glycero-3-phosphocholine = a 1-acyl-sn-glycero-2,3-cyclic phosphate + choline. The catalysed reaction is a 1-acyl-sn-glycero-3-phosphoethanolamine = a 1-acyl-sn-glycero-2,3-cyclic phosphate + ethanolamine. Functionally, dermonecrotic toxins cleave the phosphodiester linkage between the phosphate and headgroup of certain phospholipids (sphingolipid and lysolipid substrates), forming an alcohol (often choline) and a cyclic phosphate. This toxin acts on sphingomyelin (SM) wih high activity. It may also act on ceramide phosphoethanolamine (CPE), lysophosphatidylcholine (LPC) and lysophosphatidylethanolamine (LPE), but not on lysophosphatidylserine (LPS), and lysophosphatidylglycerol (LPG). It acts by transphosphatidylation, releasing exclusively cyclic phosphate products as second products. Shows high hemolytic activity. Causes dermonecrosis, induces inflammatory response, platelet aggregation and increases vessel permeability. Shows no lethality when injected at higher dose into mice. May cause complement-dependent hemolysis as well as in a complement-independent manner. The hemolysis provoked in a complement-independent manner may be composed of several steps. The toxin may bind to erythrocyte membranes, may hydrolyze membrane phospholipids (SM and LPC) thus generating metabolism products that may cause hemolysis, probably by provoking an increase of calcium inside cells. The calcium influx may be due to the opening of L-type calcium channels, since L-type calcium channel blockers inhibit calcium influx. The sequence is that of Dermonecrotic toxin LiSicTox-alphaII1 from Loxosceles intermedia (Brown spider).